We begin with the raw amino-acid sequence, 1187 residues long: Myelin transcription factor 1-like protein (1187 aa).

Residues 1–22 (MDVDSEEKRHRTRSKGVRVPVE) form a disordered region. Residues 22-65 (EPAIQELFSCPTPGCDGSGHVSGKYARHRSVYGCPLAKKRKTQD) form a CCHHC-type 1 zinc finger. Residues cysteine 31, cysteine 36, histidine 49, and cysteine 55 each coordinate Zn(2+). Disordered stretches follow at residues 56-178 (PLAK…QMSC) and 221-248 (RTES…GRKS). Residues 89 to 172 (ECYESDGTED…EEEEEEEENE (84 aa)) show a composition bias toward acidic residues. Position 251 is a phosphoserine (serine 251). 2 disordered regions span residues 343 to 422 (SETN…DRSE) and 450 to 514 (REKM…GCDG). Positions 344–358 (ETNPQDRSQPPNMSV) are enriched in polar residues. Basic and acidic residues-rich tracts occupy residues 362 to 377 (VRQE…DRSY), 401 to 412 (AKEDGCHERDDD), 450 to 488 (REKM…DSHV), and 496 to 506 (DPSRTEKRESK). CCHHC-type zinc fingers lie at residues 498–541 (SRTE…PPEI) and 542–585 (LAMH…KLAK). Residues cysteine 507, cysteine 512, histidine 525, cysteine 531, cysteine 551, cysteine 556, histidine 569, and cysteine 575 each contribute to the Zn(2+) site. The interval 686–710 (ASPSSSTTSSYAPSSSSNLSCGGGS) is disordered. 3 consecutive CCHHC-type zinc fingers follow at residues 897-940 (LATS…GIRI), 946-989 (DKED…QKDG), and 999-1042 (KSVK…MKKA). Zn(2+) is bound by residues cysteine 906, cysteine 911, histidine 924, cysteine 930, cysteine 955, cysteine 960, histidine 973, cysteine 979, cysteine 1008, cysteine 1013, histidine 1026, and cysteine 1032. Residues 1058–1132 (NGIENDEEIK…ANLSQSLIHS (75 aa)) are a coiled coil.

Belongs to the MYT1 family. Interacts with SIN3B. As to expression, brain.

Its subcellular location is the nucleus. The protein resides in the chromosome. Transcription factor that plays a key role in neuronal differentiation by specifically repressing expression of non-neuronal genes during neuron differentiation. In contrast to other transcription repressors that inhibit specific lineages, mediates repression of multiple differentiation programs. Also represses expression of negative regulators of neurogenesis, such as members of the Notch signaling pathway, including HES1. The combination of three transcription factors, ASCL1, POU3F2/BRN2 and MYT1L, is sufficient to reprogram fibroblasts and other somatic cells into induced neuronal (iN) cells in vitro. Directly binds the 5'-AAGTT-3' core motif present on the promoter of target genes and represses transcription by recruiting a multiprotein complex containing SIN3B. The 5'-AAGTT-3' core motif is absent from the promoter of neural genes. This Mus musculus (Mouse) protein is Myelin transcription factor 1-like protein.